Reading from the N-terminus, the 73-residue chain is Guanine nucleotide-binding protein G(I)/G(S)/G(O) subunit gamma-11 (73 aa).

A disordered region spans residues 54–73; that stretch reads VKGIPEDKNPFKEKGSCIIS. Position 70 is a cysteine methyl ester (Cys70). Cys70 is lipidated: S-farnesyl cysteine. Residues 71–73 constitute a propeptide, removed in mature form; the sequence is IIS.

It belongs to the G protein gamma family. G proteins are composed of 3 units, alpha, beta and gamma. Interacts with beta-1 and beta-3, but not with beta-2.

It localises to the cell membrane. Guanine nucleotide-binding proteins (G proteins) are involved as a modulator or transducer in various transmembrane signaling systems. The beta and gamma chains are required for the GTPase activity, for replacement of GDP by GTP, and for G protein-effector interaction. In Bos taurus (Bovine), this protein is Guanine nucleotide-binding protein G(I)/G(S)/G(O) subunit gamma-11 (GNG11).